We begin with the raw amino-acid sequence, 437 residues long: UDP-N-acetylmuramate--L-alanine ligase (437 aa).

114 to 120 (GTHGKTS) lines the ATP pocket.

Belongs to the MurCDEF family.

Its subcellular location is the cytoplasm. The catalysed reaction is UDP-N-acetyl-alpha-D-muramate + L-alanine + ATP = UDP-N-acetyl-alpha-D-muramoyl-L-alanine + ADP + phosphate + H(+). It participates in cell wall biogenesis; peptidoglycan biosynthesis. In terms of biological role, cell wall formation. The protein is UDP-N-acetylmuramate--L-alanine ligase of Lactobacillus helveticus (strain DPC 4571).